The primary structure comprises 446 residues: Phosphoglucosamine mutase (446 aa).

The active-site Phosphoserine intermediate is Ser-100. Residues Ser-100, Asp-241, Asp-243, and Asp-245 each coordinate Mg(2+). Position 100 is a phosphoserine (Ser-100).

The protein belongs to the phosphohexose mutase family. Mg(2+) is required as a cofactor. Post-translationally, activated by phosphorylation.

It catalyses the reaction alpha-D-glucosamine 1-phosphate = D-glucosamine 6-phosphate. Its function is as follows. Catalyzes the conversion of glucosamine-6-phosphate to glucosamine-1-phosphate. The protein is Phosphoglucosamine mutase of Methylorubrum populi (strain ATCC BAA-705 / NCIMB 13946 / BJ001) (Methylobacterium populi).